We begin with the raw amino-acid sequence, 478 residues long: UBP1-associated protein 2A (478 aa).

The interval 1 to 99 (MTKKRKLEGE…NQEDDDDEPI (99 aa)) is disordered. Residues 41–75 (GDVEEVEYEEVEEEQEEEVEDDDDEDDGDENEDQT) show a composition bias toward acidic residues. 2 RRM domains span residues 140–217 (RKIF…LASK) and 245–328 (KKIY…KPGK). Disordered stretches follow at residues 321-359 (IDGPKPGKQQQHHHNPHAYNNPRYQRNDNNGYGPPGGHG) and 442-478 (GTQPGLQGGYQTPQPGQGGTSRGQHGVGPYGTPYMGH). Positions 442 to 456 (GTQPGLQGGYQTPQP) are enriched in low complexity. Positions 457-470 (GQGGTSRGQHGVGP) are enriched in gly residues.

In terms of assembly, interacts with UBA1A, UBA2A, UBP1A, UBP1B, UBP1C and SRK2E. In terms of tissue distribution, expressed in young leaves, flowers and embryos.

Its subcellular location is the nucleus. Heterogeneous nuclear ribonucleoprotein (hnRNP)-like protein that acts as a component of a complex regulating the turnover of mRNAs in the nucleus. Binds with high affinity to RNA molecules that contain U-rich sequences in 3'-UTRs. May function in complex with UBP1 and contribute to the stabilization of mRNAs in the nucleus. However, unlike UBP1, UBA2A does not stimulate pre-mRNA splicing. This is UBP1-associated protein 2A (UBA2A) from Arabidopsis thaliana (Mouse-ear cress).